A 276-amino-acid polypeptide reads, in one-letter code: MAASAGGPGSWSENILEYFLRNSQITAEDGAEITWYHAANHKAQTNEALKSTAHMIEADVLLPSDGSEHSQPIMAHPPETNSDNTLQEWLTEVMKSNKGIKLDFKSLAVVEPSMMLLENVKRHLKRPVWINADILPGPNGNSKVIDAKPFLDTVISFFPDVTFSLGWTTGWHPEKVNEGYSWTMVKEMEYICNELSQPVTFPVRAALVRQSCSQLLWLLKKSNRYSLTIWTGKNDNYSVEDLLYIRDHFDKKQVFYDILEPQNHEFKQAIGIKVNL.

Belongs to the menorin family.

Its function is as follows. Essential for survival of retinal photoreceptor cells. The polypeptide is Protein FAM151B (FAM151B) (Homo sapiens (Human)).